The chain runs to 550 residues: Rab GTPase-activating protein 22 (550 aa).

The disordered stretch occupies residues 1-49 (MKALRRSYTSTSSGNSSSSSSLPSSSSSSLPSSSSSSPPSSNSNSYSNS). Residues 7–49 (SYTSTSSGNSSSSSSLPSSSSSSLPSSSSSSPPSSNSNSYSNS) show a composition bias toward low complexity. A Rab-GAP TBC domain is found at 126 to 460 (GVDPSIRAEV…CLWEVMWADQ (335 aa)).

Interacts with AGT1 in peroxisome under biotic stress conditions. In terms of tissue distribution, expressed in root meristems, vascular tissues, guard cells, trichomes, styles and receptacles.

It localises to the nucleus. Its subcellular location is the peroxisome. Functionally, involved in defense response against fungal and bacterial pathogens. Acts as a negative regulator of jasmonate (JA) responses during infection by the soil-born fungal pathogen Verticillium longisporum. Involved in abscisic acid-dependent stomata closure in response to infection by V.longisporum and Pseudomonas syringae. May be a downstream component of brassinosteroid-mediated signaling. The polypeptide is Rab GTPase-activating protein 22 (Arabidopsis thaliana (Mouse-ear cress)).